A 128-amino-acid chain; its full sequence is MSNEQGKGMGFFGNKGKPASEKKDEKKTKLDLDYKPDLNPSTPYDPTLPVKATLVNGDKRGTLRIPLETKHEFDALLEISEYQYTYELLGEMLDTWMKKLTPEQLRLFHASLENIKRKAAIKEAKKKK.

Residues Met1–Val50 form a disordered region. A compositionally biased stretch (basic and acidic residues) spans Pro18–Pro36.

This is an uncharacterized protein from Bacillus anthracis.